The chain runs to 163 residues: Phosphopantetheine adenylyltransferase (163 aa).

Serine 8 is a binding site for substrate. Residues serine 8–phenylalanine 9 and histidine 16 contribute to the ATP site. The substrate site is built by lysine 40, threonine 72, and arginine 86. Residues glycine 87–arginine 89, glutamate 97, and histidine 122–serine 128 contribute to the ATP site.

It belongs to the bacterial CoaD family. Homohexamer. Mg(2+) is required as a cofactor.

It is found in the cytoplasm. The catalysed reaction is (R)-4'-phosphopantetheine + ATP + H(+) = 3'-dephospho-CoA + diphosphate. The protein operates within cofactor biosynthesis; coenzyme A biosynthesis; CoA from (R)-pantothenate: step 4/5. In terms of biological role, reversibly transfers an adenylyl group from ATP to 4'-phosphopantetheine, yielding dephospho-CoA (dPCoA) and pyrophosphate. The sequence is that of Phosphopantetheine adenylyltransferase from Synechococcus sp. (strain CC9902).